The chain runs to 606 residues: Double-stranded RNA-binding protein Staufen homolog 2 (606 aa).

DRBM domains lie at 8 to 75 (TPMC…ESSL) and 95 to 181 (TPTV…ALKN). 2 disordered regions span residues 57–97 (SIKK…ITPT) and 177–205 (QALK…SDAS). A compositionally biased stretch (polar residues) spans 85–97 (ADSNSNPGSITPT). Over residues 192-205 (SEEKKETEENSDAS) the composition is skewed to basic and acidic residues. DRBM domains follow at residues 207–274 (SEIS…ELKK), 307–375 (NPIS…QLGY), and 493–557 (QPSQ…QLSE). The interval 580-606 (RLAERTESKPTNSGTTAQDCKDSKAVV) is disordered. The segment covering 588 to 597 (KPTNSGTTAQ) has biased composition (polar residues).

In terms of biological role, RNA-binding protein required for the microtubule-dependent transport of RNAs within polarized cell types. The chain is Double-stranded RNA-binding protein Staufen homolog 2 (stau2) from Danio rerio (Zebrafish).